A 63-amino-acid polypeptide reads, in one-letter code: Large ribosomal subunit protein bL28 (63 aa).

This sequence belongs to the bacterial ribosomal protein bL28 family.

The protein is Large ribosomal subunit protein bL28 of Clostridium beijerinckii (strain ATCC 51743 / NCIMB 8052) (Clostridium acetobutylicum).